We begin with the raw amino-acid sequence, 485 residues long: Ribulose bisphosphate carboxylase large chain (485 aa).

Positions 1 to 2 are excised as a propeptide; the sequence is MS. P3 is modified (N-acetylproline). At K14 the chain carries N6,N6,N6-trimethyllysine. Substrate is bound by residues N123 and T173. The active-site Proton acceptor is the K175. Residue K177 participates in substrate binding. Mg(2+) contacts are provided by K201, D203, and E204. N6-carboxylysine is present on K201. Residue H294 is the Proton acceptor of the active site. Substrate contacts are provided by R295, H327, and S379.

It belongs to the RuBisCO large chain family. Type I subfamily. In terms of assembly, heterohexadecamer of 8 large chains and 8 small chains; disulfide-linked. The disulfide link is formed within the large subunit homodimers. Requires Mg(2+) as cofactor. The disulfide bond which can form in the large chain dimeric partners within the hexadecamer appears to be associated with oxidative stress and protein turnover.

The protein localises to the plastid. It localises to the chloroplast. The catalysed reaction is 2 (2R)-3-phosphoglycerate + 2 H(+) = D-ribulose 1,5-bisphosphate + CO2 + H2O. The enzyme catalyses D-ribulose 1,5-bisphosphate + O2 = 2-phosphoglycolate + (2R)-3-phosphoglycerate + 2 H(+). Its function is as follows. RuBisCO catalyzes two reactions: the carboxylation of D-ribulose 1,5-bisphosphate, the primary event in carbon dioxide fixation, as well as the oxidative fragmentation of the pentose substrate in the photorespiration process. Both reactions occur simultaneously and in competition at the same active site. The protein is Ribulose bisphosphate carboxylase large chain of Flaveria bidentis (Coastal plain yellowtops).